The chain runs to 707 residues: Kinesin-like protein KIN-13B (707 aa).

The region spanning 152–477 is the Kinesin motor domain; it reads KIKVVVRKRP…LRYADRVKSL (326 aa). 243-250 is a binding site for ATP; that stretch reads GQTGSGKT. A coiled-coil region spans residues 619-656; the sequence is EHLNELLQEEEDLVSAHRKQVEETLDMIKEEMNLLVEA.

The protein belongs to the TRAFAC class myosin-kinesin ATPase superfamily. Kinesin family. KIN-13 subfamily.

In Oryza sativa subsp. japonica (Rice), this protein is Kinesin-like protein KIN-13B.